The chain runs to 526 residues: Peptide chain release factor 3 (526 aa).

The tr-type G domain occupies 8–277 (NKRRTFAIIS…GLTEWAPKPQ (270 aa)). Residues 17–24 (SHPDAGKT), 85–89 (DTPGH), and 139–142 (NKLD) contribute to the GTP site.

It belongs to the TRAFAC class translation factor GTPase superfamily. Classic translation factor GTPase family. PrfC subfamily.

Its subcellular location is the cytoplasm. Functionally, increases the formation of ribosomal termination complexes and stimulates activities of RF-1 and RF-2. It binds guanine nucleotides and has strong preference for UGA stop codons. It may interact directly with the ribosome. The stimulation of RF-1 and RF-2 is significantly reduced by GTP and GDP, but not by GMP. The sequence is that of Peptide chain release factor 3 from Actinobacillus pleuropneumoniae serotype 7 (strain AP76).